The primary structure comprises 233 residues: Gamma-glutamyl-hercynylcysteine sulfoxide hydrolase (233 aa).

The Nucleophile role is filled by cysteine 2. A Glutamine amidotransferase type-2 domain is found at 2–233 (CRHLGWLGAQ…TALDRAKGPR (232 aa)).

It catalyses the reaction gamma-L-glutamyl-hercynylcysteine S-oxide + H2O = S-(hercyn-2-yl)-L-cysteine S-oxide + L-glutamate. Its pathway is amino-acid biosynthesis; ergothioneine biosynthesis. Catalyzes the hydrolysis of the gamma-glutamyl amide bond of hercynyl-gamma-L-glutamyl-L-cysteine sulfoxide to produce hercynylcysteine sulfoxide, a step in the biosynthesis pathway of ergothioneine. Ergothioneine is an antioxidant that protects mycobacteria from oxidative stress. The protein is Gamma-glutamyl-hercynylcysteine sulfoxide hydrolase (egtC) of Mycobacterium tuberculosis (strain ATCC 25618 / H37Rv).